Here is a 103-residue protein sequence, read N- to C-terminus: uncharacterized protein (103 aa).

An N-terminal signal peptide occupies residues 1 to 22 (MFRPFLNSLMLGSLFFPFIAIA).

To the N-terminal of the FimA/PapA family of fimbria proteins.

This is an uncharacterized protein from Escherichia coli (strain K12).